The chain runs to 243 residues: Probable fructoselysine utilization operon transcriptional repressor (243 aa).

Residues 10–78 form the HTH gntR-type domain; sequence QLLYATVRQR…QGKGTFVQSQ (69 aa). A DNA-binding region (H-T-H motif) is located at residues 38–57; it reads ENELCTQYNVSRITIRKAIS.

Its pathway is carbohydrate metabolism; fructoselysine degradation [regulation]. In terms of biological role, may regulate the transcription of the frlABCDR operon, involved in the utilization of fructoselysine and psicoselysine. This chain is Probable fructoselysine utilization operon transcriptional repressor, found in Escherichia coli (strain K12).